A 334-amino-acid polypeptide reads, in one-letter code: Phosphoribosylformylglycinamidine cyclo-ligase (334 aa).

This sequence belongs to the AIR synthase family.

It is found in the cytoplasm. It catalyses the reaction 2-formamido-N(1)-(5-O-phospho-beta-D-ribosyl)acetamidine + ATP = 5-amino-1-(5-phospho-beta-D-ribosyl)imidazole + ADP + phosphate + H(+). The protein operates within purine metabolism; IMP biosynthesis via de novo pathway; 5-amino-1-(5-phospho-D-ribosyl)imidazole from N(2)-formyl-N(1)-(5-phospho-D-ribosyl)glycinamide: step 2/2. This Pyrococcus horikoshii (strain ATCC 700860 / DSM 12428 / JCM 9974 / NBRC 100139 / OT-3) protein is Phosphoribosylformylglycinamidine cyclo-ligase.